A 299-amino-acid polypeptide reads, in one-letter code: Tetrahydromethanopterin S-methyltransferase subunit E (299 aa).

6 helical membrane-spanning segments follow: residues 57 to 79 (AISG…AWAL), 95 to 115 (GVAA…RTVG), 133 to 153 (IGPI…AAYL), 158 to 178 (LGNP…VGAI), 237 to 257 (GLCF…GNII), and 262 to 282 (VTKT…AAGI).

Belongs to the MtrE family. As to quaternary structure, the complex is composed of 8 subunits; MtrA, MtrB, MtrC, MtrD, MtrE, MtrF, MtrG and MtrH.

It is found in the cell membrane. The enzyme catalyses 5-methyl-5,6,7,8-tetrahydromethanopterin + coenzyme M + 2 Na(+)(in) = 5,6,7,8-tetrahydromethanopterin + methyl-coenzyme M + 2 Na(+)(out). Its pathway is one-carbon metabolism; methanogenesis from CO(2); methyl-coenzyme M from 5,10-methylene-5,6,7,8-tetrahydromethanopterin: step 2/2. In terms of biological role, part of a complex that catalyzes the formation of methyl-coenzyme M and tetrahydromethanopterin from coenzyme M and methyl-tetrahydromethanopterin. This is an energy-conserving, sodium-ion translocating step. This Methanococcus maripaludis (strain C5 / ATCC BAA-1333) protein is Tetrahydromethanopterin S-methyltransferase subunit E.